The chain runs to 178 residues: Hypoxanthine phosphoribosyltransferase (178 aa).

2 residues coordinate diphosphate: arginine 43 and glycine 44. Glutamate 99 lines the GMP pocket. Glutamate 99 lines the IMP pocket. The Mg(2+) site is built by glutamate 99 and aspartate 100. Catalysis depends on aspartate 103, which acts as the Proton acceptor. Residues 103–108, lysine 131, and aspartate 159 each bind GMP; that span reads DSGNTL. IMP-binding positions include 103–108 and lysine 131; that span reads DSGNTL. Arginine 165 serves as a coordination point for diphosphate.

The protein belongs to the purine/pyrimidine phosphoribosyltransferase family. Homotetramer. Requires Mg(2+) as cofactor.

The protein resides in the cytoplasm. The enzyme catalyses IMP + diphosphate = hypoxanthine + 5-phospho-alpha-D-ribose 1-diphosphate. It catalyses the reaction GMP + diphosphate = guanine + 5-phospho-alpha-D-ribose 1-diphosphate. It functions in the pathway purine metabolism; IMP biosynthesis via salvage pathway; IMP from hypoxanthine: step 1/1. In terms of biological role, purine salvage pathway enzyme which catalyzes the transfer of the ribosyl-5-phosphate group from 5-phospho-alpha-D-ribose 1-diphosphate (PRPP) to the N9 position of hypoxanthine to yield IMP (inosine 5'-monophosphate). To a lesser extent, can also act on guanine leading to GMP, but shows a highly less efficient activity with xanthine. The sequence is that of Hypoxanthine phosphoribosyltransferase (hpt) from Salmonella typhimurium (strain LT2 / SGSC1412 / ATCC 700720).